The following is a 341-amino-acid chain: Homeobox protein mls-2 (341 aa).

Disordered regions lie at residues 1–78 (MPTS…DSTN) and 139–209 (SNPD…TVFS). Positions 64 to 78 (TTQSSPSASSEDSTN) are enriched in polar residues. A compositionally biased stretch (basic and acidic residues) spans 153 to 166 (KDEKSEGKDGETRD). Residues 201–260 (KKKTRTVFSRSQVSQLEMMFECKRYLSSQERSNLAQKLHLTETQVKIWFQNRRNKFKRQA) constitute a DNA-binding region (homeobox).

It belongs to the HMX homeobox family. In terms of tissue distribution, expressed in a subset of head neurons, including AIM and ASK (at protein level).

Its subcellular location is the nucleus. Transcription factor that binds to the promoter of target genes. Regulates fate specification and/or differentiation of multiple cell types arising from the embryonic mesodermal (M) lineage and the ABp(l/r)paa precursors. In the postembryonic M lineage, regulates cleavage orientation, cell proliferation and cell fate specification. Regulates hlh-1 expression to specify coelomocyte fate in the mesodermal (M) lineage. In AWC neurons, initiates expression of ceh-36, leading to the expression of terminal differentiation genes. Regulates ventral cephalic sheath (CEPsh) glia differentiation and expression of transcription factor hlh-17 in CEPsh glia. Promotes terminal differentiation and morphogenesis of the epithelial duct and pore cells. In the duct cell, cooperates with the EGF-Ras-ERK pathway in turning on the terminal differentiation gene lin-48. The sequence is that of Homeobox protein mls-2 from Caenorhabditis elegans.